Here is a 136-residue protein sequence, read N- to C-terminus: MTERTLVLIKPDGVQRRLIGEIISRIEAKGLAIVALELKNVGDDTARAHYAEHEGKPFFASLLEFITSGPVVAAVLEGPRAIAAFRQLAGGTDPVEKAIPGTIRGDLGLETQFNLVHGSDSPDSAAREIALWFPGL.

The ATP site is built by lysine 10, phenylalanine 58, arginine 86, threonine 92, arginine 104, and asparagine 114. Histidine 117 serves as the catalytic Pros-phosphohistidine intermediate.

Belongs to the NDK family. As to quaternary structure, homotetramer. It depends on Mg(2+) as a cofactor.

The protein localises to the cytoplasm. The enzyme catalyses a 2'-deoxyribonucleoside 5'-diphosphate + ATP = a 2'-deoxyribonucleoside 5'-triphosphate + ADP. It carries out the reaction a ribonucleoside 5'-diphosphate + ATP = a ribonucleoside 5'-triphosphate + ADP. In terms of biological role, major role in the synthesis of nucleoside triphosphates other than ATP. The ATP gamma phosphate is transferred to the NDP beta phosphate via a ping-pong mechanism, using a phosphorylated active-site intermediate. The sequence is that of Nucleoside diphosphate kinase from Mycolicibacterium gilvum (strain PYR-GCK) (Mycobacterium gilvum (strain PYR-GCK)).